Consider the following 238-residue polypeptide: ATP synthase subunit a (238 aa).

5 helical membrane-spanning segments follow: residues 18–38 (LTLL…VFWA), 76–96 (YSLL…LGLF), 114–134 (NLAF…IEGV), 166–186 (SLAI…GLIV), and 193–213 (VYWW…SVFI).

The protein belongs to the ATPase A chain family. F-type ATPases have 2 components, CF(1) - the catalytic core - and CF(0) - the membrane proton channel. CF(1) has five subunits: alpha(3), beta(3), gamma(1), delta(1), epsilon(1). CF(0) has three main subunits: a(1), b(2) and c(9-12). The alpha and beta chains form an alternating ring which encloses part of the gamma chain. CF(1) is attached to CF(0) by a central stalk formed by the gamma and epsilon chains, while a peripheral stalk is formed by the delta and b chains.

Its subcellular location is the cell membrane. Its function is as follows. Key component of the proton channel; it plays a direct role in the translocation of protons across the membrane. The chain is ATP synthase subunit a from Streptococcus pyogenes serotype M49 (strain NZ131).